The chain runs to 205 residues: Ribosomal RNA large subunit methyltransferase E (205 aa).

5 residues coordinate S-adenosyl-L-methionine: Gly-60, Trp-62, Asp-80, Asp-96, and Asp-121. The active-site Proton acceptor is Lys-161.

Belongs to the class I-like SAM-binding methyltransferase superfamily. RNA methyltransferase RlmE family.

The protein localises to the cytoplasm. The catalysed reaction is uridine(2552) in 23S rRNA + S-adenosyl-L-methionine = 2'-O-methyluridine(2552) in 23S rRNA + S-adenosyl-L-homocysteine + H(+). Its function is as follows. Specifically methylates the uridine in position 2552 of 23S rRNA at the 2'-O position of the ribose in the fully assembled 50S ribosomal subunit. The sequence is that of Ribosomal RNA large subunit methyltransferase E from Dechloromonas aromatica (strain RCB).